The following is a 55-amino-acid chain: ATP synthase protein 8 (55 aa).

A helical membrane pass occupies residues 7–28 (ISWFFNFLLAWFFLFIVVTILL).

This sequence belongs to the ATPase protein 8 family. F-type ATPases have 2 components, CF(1) - the catalytic core - and CF(0) - the membrane proton channel.

Its subcellular location is the mitochondrion membrane. Its function is as follows. Mitochondrial membrane ATP synthase (F(1)F(0) ATP synthase or Complex V) produces ATP from ADP in the presence of a proton gradient across the membrane which is generated by electron transport complexes of the respiratory chain. F-type ATPases consist of two structural domains, F(1) - containing the extramembraneous catalytic core and F(0) - containing the membrane proton channel, linked together by a central stalk and a peripheral stalk. During catalysis, ATP synthesis in the catalytic domain of F(1) is coupled via a rotary mechanism of the central stalk subunits to proton translocation. Part of the complex F(0) domain. Minor subunit located with subunit a in the membrane. In Pisaster ochraceus (Ochre sea star), this protein is ATP synthase protein 8 (MT-ATP8).